Consider the following 1025-residue polypeptide: Multidrug resistance protein MdtC (1025 aa).

A run of 12 helical transmembrane segments spans residues 15–35 (ILIS…LPVA), 333–353 (EVEQ…FLFL), 360–380 (LIPA…MYLC), 387–407 (LSLM…IVVL), 431–451 (VGFT…PLLL), 469–489 (VAIG…CGWL), 528–548 (LTGL…ISIP), 851–871 (AQVI…GMLY), 875–895 (VHPL…LLAL), 897–917 (IFDA…IGIV), 953–973 (PIMM…LSGG), and 984–1004 (ITIV…TPVV).

Belongs to the resistance-nodulation-cell division (RND) (TC 2.A.6) family. MdtC subfamily. Part of a tripartite efflux system composed of MdtA, MdtB and MdtC. MdtC forms a heteromultimer with MdtB.

The protein localises to the cell inner membrane. This chain is Multidrug resistance protein MdtC, found in Klebsiella pneumoniae (strain 342).